The following is a 342-amino-acid chain: ATPase asna-1 (342 aa).

26–33 (KGGVGKTT) serves as a coordination point for ATP. The active site involves aspartate 55. Positions 243 and 270 each coordinate ATP. The Zn(2+) site is built by cysteine 285 and cysteine 288.

This sequence belongs to the arsA ATPase family. In terms of assembly, homodimer.

The protein resides in the cytoplasm. The protein localises to the endoplasmic reticulum. Its function is as follows. ATPase required for the post-translational delivery of tail-anchored (TA) proteins to the endoplasmic reticulum. Recognizes and selectively binds the transmembrane domain of TA proteins in the cytosol. This complex then targets to the endoplasmic reticulum by membrane-bound receptors, where the tail-anchored protein is released for insertion. This process is regulated by ATP binding and hydrolysis. ATP binding drives the homodimer towards the closed dimer state, facilitating recognition of newly synthesized TA membrane proteins. ATP hydrolysis is required for insertion. Subsequently, the homodimer reverts towards the open dimer state, lowering its affinity for the membrane-bound receptor, and returning it to the cytosol to initiate a new round of targeting. May be involved in insulin signaling. The polypeptide is ATPase asna-1 (Caenorhabditis elegans).